The sequence spans 146 residues: Probable gamma-secretase subunit PEN-2 (146 aa).

Residues 1-26 (MEATRSDDPSLNPIRNRNPNPNPNPN) are disordered. The Lumenal segment spans residues 1–61 (MEATRSDDPS…SVDYARRFYK (61 aa)). Over residues 9–19 (PSLNPIRNRNP) the composition is skewed to low complexity. A helical membrane pass occupies residues 62–82 (FGFALLPWLWFVNCFYFWPVL). Over 83–98 (RHSRAFPQIRNYVVRS) the chain is Cytoplasmic. The chain crosses the membrane as a helical span at residues 99 to 119 (AIGFSVFTALLSAWALTFSIG). Topologically, residues 120–146 (GEQLFGPLYDKLVMYNVADRLGLSGLA) are lumenal.

Belongs to the PEN-2 family. As to quaternary structure, probable component of the gamma-secretase complex, a complex composed of a presenilin homodimer, nicastrin, APH1 and PEN2.

Its subcellular location is the membrane. Functionally, probable subunit of the gamma-secretase complex, an endoprotease complex that catalyzes the intramembrane cleavage of integral membrane proteins such as Notch receptors. The chain is Probable gamma-secretase subunit PEN-2 from Arabidopsis thaliana (Mouse-ear cress).